The sequence spans 423 residues: Probable WRKY transcription factor 58 (423 aa).

Disordered regions lie at residues 91–128, 142–171, and 215–284; these read SSAHTGFIQPRQQSQPQPQRPDTFPHHMPPSTSVAVHG, RNHYNNPGNNNNNRSYNVVNVDKPADDGYN, and IYKG…GVST. 2 stretches are compositionally biased toward low complexity: residues 99-111 and 144-162; these read QPRQQSQPQPQRP and HYNNPGNNNNNRSYNVVNV. A DNA-binding region (WRKY 1) is located at residues 161–225; the sequence is NVDKPADDGY…YKGQHDHERP (65 aa). Positions 259 to 271 are enriched in acidic residues; the sequence is DDDDDDDEDDEDL. The segment at residues 300–365 is a DNA-binding region (WRKY 2); the sequence is SEVDLLDDGY…YEGKHNHDVP (66 aa).

It is found in the nucleus. Functionally, transcription factor. Interacts specifically with the W box (5'-(T)TGAC[CT]-3'), a frequently occurring elicitor-responsive cis-acting element. This is Probable WRKY transcription factor 58 (WRKY58) from Arabidopsis thaliana (Mouse-ear cress).